We begin with the raw amino-acid sequence, 204 residues long: High frequency lysogenization protein HflD homolog (204 aa).

The protein belongs to the HflD family.

Its subcellular location is the cytoplasm. It is found in the cell inner membrane. The protein is High frequency lysogenization protein HflD homolog of Shewanella woodyi (strain ATCC 51908 / MS32).